Consider the following 523-residue polypeptide: Occludin (523 aa).

The segment at Met1–Asn20 is disordered. Over Met1–Arg66 the chain is Cytoplasmic. Residues Ser60–Arg269 enclose the MARVEL domain. A helical membrane pass occupies residues Ile67–Leu87. Residues Ala88–Phe140 are Extracellular-facing. Residues Leu141–Ile161 traverse the membrane as a helical segment. The Cytoplasmic segment spans residues Arg162–Leu173. Residues Ile174–Ile194 form a helical membrane-spanning segment. Topologically, residues Met195 to Ala244 are extracellular. Cysteines 216 and 237 form a disulfide. A helical transmembrane segment spans residues Ile245 to Val265. Topologically, residues Lys266–Thr523 are cytoplasmic. A Phosphoserine modification is found at Ser302. The tract at residues Ser302–Pro338 is disordered. The residue at position 305 (Thr305) is a Phosphothreonine. Phosphoserine is present on residues Ser313, Ser321, Ser340, and Ser360. Residues Asp363–Glu408 are disordered. Residues Arg368–Arg381 show a composition bias toward polar residues. A Phosphotyrosine modification is found at Tyr369. Residues Ser370 and Ser371 each carry the phosphoserine modification. Positions Thr382 to Ala391 are enriched in basic residues. Residues Lys392–Thr401 show a composition bias toward basic and acidic residues. Phosphotyrosine occurs at positions 399 and 403. A phosphothreonine; by PKC/PRKCH mark is found at Thr404 and Thr405. Ser409 carries the post-translational modification Phosphoserine. Positions Glu415–Thr523 constitute an OCEL domain. Positions Tyr433–Lys489 form a coiled coil. Residue Ser491 is modified to Phosphoserine.

It belongs to the ELL/occludin family. In terms of assembly, interacts with TJP1/ZO1. Interacts with VAPA. Interacts with CLDN1, CLDN6, CLDN9, CLDN11, CLDN12 and CLDN17. Interacts with PLSCR1. Interacts with LSR, ILDR1 and ILDR2. Interacts with TJP2/ZO2. Post-translationally, dephosphorylated by PTPRJ.

It is found in the cell membrane. The protein resides in the cell junction. The protein localises to the tight junction. Functionally, may play a role in the formation and regulation of the tight junction (TJ) paracellular permeability barrier. May be involved in the organization of actin in endothelial cells. The sequence is that of Occludin (Ocln) from Rattus norvegicus (Rat).